The chain runs to 559 residues: Urocanate hydratase (559 aa).

Residues 50 to 51, glutamine 128, 174 to 176, aspartate 194, arginine 199, 240 to 241, 261 to 265, 271 to 272, and tyrosine 320 each bind NAD(+); these read GG, GMG, NA, QTSAH, and YI. Residue cysteine 408 is part of the active site. Residue glycine 490 coordinates NAD(+).

The protein belongs to the urocanase family. NAD(+) serves as cofactor.

It localises to the cytoplasm. The catalysed reaction is 4-imidazolone-5-propanoate = trans-urocanate + H2O. It functions in the pathway amino-acid degradation; L-histidine degradation into L-glutamate; N-formimidoyl-L-glutamate from L-histidine: step 2/3. Its function is as follows. Catalyzes the conversion of urocanate to 4-imidazolone-5-propionate. This is Urocanate hydratase from Halalkalibacterium halodurans (strain ATCC BAA-125 / DSM 18197 / FERM 7344 / JCM 9153 / C-125) (Bacillus halodurans).